The following is a 517-amino-acid chain: MSPLALVSVSDKKNIIPFCKELVEHFNYKILSSGGTAKHLIEAKIPVIKVADFTNSPEILGGRVKTLHPKIHGGILAIRTDEEHKKDIEANNLELIDLVVVNLYPFKKTVDGGAKWEDAIENIDIGGPSMIRSAAKNHKDVSVLVDSSQYQSFLEESKKGELKDSYKAKLALEAFQHTADYDTAISNWIRKERDLQSSKYIESYPLIKTLRYGENPHQKAFWYGLSNIGWNSAEQLQGKDLSYNNLLDLESALSTVLEFGYTEKDELATDMVASVILKHNNPCGASMSNSASKAFLNALECDSVSAFGGIVAFNSNVDSETAIHLKDIFLECVVAPSFDEEALEILKVKKNLRILKISKDQLPQKNQNSTKSIMGGLLVQDTDDSEEKTENWISVTNKNPSNQINLDLNFAWKICKHVKSNAIVIAKDQKTIGIGAGQMNRVGAAKIALKAAGRLCSDAVLASDGFFPFADTVEIANEYGIKAIIQPGGSLRDQESIDMCNSKGISMVFTQKRHFLH.

The region spanning 1 to 145 (MSPLALVSVS…KNHKDVSVLV (145 aa)) is the MGS-like domain.

This sequence belongs to the PurH family.

The catalysed reaction is (6R)-10-formyltetrahydrofolate + 5-amino-1-(5-phospho-beta-D-ribosyl)imidazole-4-carboxamide = 5-formamido-1-(5-phospho-D-ribosyl)imidazole-4-carboxamide + (6S)-5,6,7,8-tetrahydrofolate. It carries out the reaction IMP + H2O = 5-formamido-1-(5-phospho-D-ribosyl)imidazole-4-carboxamide. It functions in the pathway purine metabolism; IMP biosynthesis via de novo pathway; 5-formamido-1-(5-phospho-D-ribosyl)imidazole-4-carboxamide from 5-amino-1-(5-phospho-D-ribosyl)imidazole-4-carboxamide (10-formyl THF route): step 1/1. The protein operates within purine metabolism; IMP biosynthesis via de novo pathway; IMP from 5-formamido-1-(5-phospho-D-ribosyl)imidazole-4-carboxamide: step 1/1. The polypeptide is Bifunctional purine biosynthesis protein PurH (Prochlorococcus marinus (strain AS9601)).